The chain runs to 71 residues: DNA-directed RNA polymerases I, II, and III subunit RPABC5 (71 aa).

Zn(2+) is bound by residues Cys-7, Cys-10, Cys-44, and Cys-45.

The protein belongs to the archaeal Rpo10/eukaryotic RPB10 RNA polymerase subunit family. Component of the RNA polymerase I (Pol I), RNA polymerase II (Pol II) and RNA polymerase III (Pol III) complexes consisting of at least 13, 12 and 17 subunits, respectively.

The protein localises to the nucleus. Its function is as follows. DNA-dependent RNA polymerase catalyzes the transcription of DNA into RNA using the four ribonucleoside triphosphates as substrates. Common component of RNA polymerases I, II and III which synthesize ribosomal RNA precursors, mRNA precursors and many functional non-coding RNAs, and a small RNAs, such as 5S rRNA and tRNAs, respectively. Pol II is the central component of the basal RNA polymerase II transcription machinery. Pols are composed of mobile elements that move relative to each other. In Pol II, RBP10 is part of the core element with the central large cleft. The chain is DNA-directed RNA polymerases I, II, and III subunit RPABC5 from Brassica napus (Rape).